The primary structure comprises 496 residues: COP9 signalosome complex subunit 3 (496 aa).

Residues 243 to 411 (QASHCLGIVI…GNETTTMLRF (169 aa)) form the PCI domain. The disordered stretch occupies residues 468–496 (GSSERSGVVGSTEADGGGDLDEDLMGDGR). The span at 483–496 (GGGDLDEDLMGDGR) shows a compositional bias: acidic residues.

This sequence belongs to the CSN3 family. Component of the COP9 signalosome (CSN) complex.

The protein localises to the cytoplasm. It localises to the nucleus. Component of the COP9 signalosome (CSN) complex that acts as an regulator of the ubiquitin (Ubl) conjugation pathway by mediating the deneddylation of the cullin subunit of SCF-type E3 ubiquitin-protein ligase complexes. The CSN complex seems to link protein degradation to sexual development. This Emericella nidulans (strain FGSC A4 / ATCC 38163 / CBS 112.46 / NRRL 194 / M139) (Aspergillus nidulans) protein is COP9 signalosome complex subunit 3 (csnC).